A 265-amino-acid chain; its full sequence is Glutamate racemase (265 aa).

Substrate contacts are provided by residues 7–8 (DS) and 39–40 (YG). Residue Cys-71 is the Proton donor/acceptor of the active site. 72-73 (NT) is a binding site for substrate. Cys-184 serves as the catalytic Proton donor/acceptor. 185–186 (TH) contacts substrate.

This sequence belongs to the aspartate/glutamate racemases family.

The catalysed reaction is L-glutamate = D-glutamate. The protein operates within cell wall biogenesis; peptidoglycan biosynthesis. Provides the (R)-glutamate required for cell wall biosynthesis. This Sulfurovum sp. (strain NBC37-1) protein is Glutamate racemase.